The chain runs to 26 residues: Small toxic protein ShoB (26 aa).

A helical transmembrane segment spans residues 7 to 24; sequence LIKRVIKIIIAVLQLILL.

It is found in the membrane. Toxic component of a type I toxin-antitoxin (TA) system. May be a toxic protein; overexpression causes cessation of growth and rapid membrane depolarization. Overexpression induces stress-response and a number of membrane protein genes. The protein is Small toxic protein ShoB (shoB) of Escherichia coli (strain K12).